The chain runs to 252 residues: 3-dehydroquinate dehydratase (252 aa).

Residues Ser21, 46 to 48 (EWR), and Arg82 each bind 3-dehydroquinate. Residue His143 is the Proton donor/acceptor of the active site. The active-site Schiff-base intermediate with substrate is Lys170. 3-dehydroquinate-binding residues include Arg213, Ser232, and Gln236.

The protein belongs to the type-I 3-dehydroquinase family. Homodimer.

It catalyses the reaction 3-dehydroquinate = 3-dehydroshikimate + H2O. Its pathway is metabolic intermediate biosynthesis; chorismate biosynthesis; chorismate from D-erythrose 4-phosphate and phosphoenolpyruvate: step 3/7. Involved in the third step of the chorismate pathway, which leads to the biosynthesis of aromatic amino acids. Catalyzes the cis-dehydration of 3-dehydroquinate (DHQ) and introduces the first double bond of the aromatic ring to yield 3-dehydroshikimate. The polypeptide is 3-dehydroquinate dehydratase (Shigella flexneri serotype 5b (strain 8401)).